The following is a 94-amino-acid chain: MLKPLGDRVVIEAISKDETTASGIVLPDSAKEKPQEGRVIAVGSGRVADNGERIALEVKEGDKVIFSKYAGTEVKVDNNEYLVLRESDILAIIG.

The protein belongs to the GroES chaperonin family. As to quaternary structure, heptamer of 7 subunits arranged in a ring. Interacts with the chaperonin GroEL.

The protein localises to the cytoplasm. Together with the chaperonin GroEL, plays an essential role in assisting protein folding. The GroEL-GroES system forms a nano-cage that allows encapsulation of the non-native substrate proteins and provides a physical environment optimized to promote and accelerate protein folding. GroES binds to the apical surface of the GroEL ring, thereby capping the opening of the GroEL channel. The sequence is that of Co-chaperonin GroES from Brevibacillus brevis (strain 47 / JCM 6285 / NBRC 100599).